Here is a 311-residue protein sequence, read N- to C-terminus: Malate dehydrogenase (311 aa).

NAD(+)-binding positions include 7–13 (GAAGGIG) and Asp-34. Positions 81 and 87 each coordinate substrate. Residues Asn-94 and 117–119 (ITN) contribute to the NAD(+) site. Substrate is bound by residues Asn-119 and Arg-153. His-177 serves as the catalytic Proton acceptor. Met-227 lines the NAD(+) pocket.

Belongs to the LDH/MDH superfamily. MDH type 1 family. As to quaternary structure, homodimer.

It carries out the reaction (S)-malate + NAD(+) = oxaloacetate + NADH + H(+). Its function is as follows. Catalyzes the reversible oxidation of malate to oxaloacetate. The chain is Malate dehydrogenase from Vibrio parahaemolyticus serotype O3:K6 (strain RIMD 2210633).